We begin with the raw amino-acid sequence, 521 residues long: Alkyl hydroperoxide reductase subunit F (521 aa).

K53 is subject to N6-acetyllysine. 214–229 (DVLIVGSGPAGAAAAI) is a binding site for FAD. A disulfide bridge connects residues C345 and C348. At K354 the chain carries N6-acetyllysine. 357–371 (RVAVIGGGNSGVEAA) is an NAD(+) binding site. Residue 478-488 (TNVKGVFAAGD) participates in FAD binding.

The protein belongs to the class-II pyridine nucleotide-disulfide oxidoreductase family. Homodimer. FAD serves as cofactor.

Its function is as follows. Serves to protect the cell against DNA damage by alkyl hydroperoxides. It can use either NADH or NADPH as electron donor for direct reduction of redox dyes or of alkyl hydroperoxides when combined with the AhpC protein. The chain is Alkyl hydroperoxide reductase subunit F (ahpF) from Escherichia coli (strain K12).